The following is a 124-amino-acid chain: MAGRSEPQDDARLLQAVKIIKILYQSNPYPSPEGTRKARRNRRRRWRARQKQISEISGRVLATYLGRPPKPGDLELPELDKLSLQCVETTQDVGTSNTSQPQTATGETVPAGGNYSILGKGAKN.

A Phosphoserine; by host CK2 modification is found at serine 5. The segment at 19 to 27 is homomultimerization; the sequence is IIKILYQSN. The disordered stretch occupies residues 25–51; it reads QSNPYPSPEGTRKARRNRRRRWRARQK. The Nuclear localization signal and RNA-binding (RRE) signature appears at 35-51; it reads TRKARRNRRRRWRARQK. Positions 37–50 are enriched in basic residues; it reads KARRNRRRRWRARQ. The Nuclear export signal and binding to XPO1 signature appears at 74-85; it reads LELPELDKLSLQ. Residues 90–106 are compositionally biased toward polar residues; sequence TQDVGTSNTSQPQTATG. Positions 90-124 are disordered; that stretch reads TQDVGTSNTSQPQTATGETVPAGGNYSILGKGAKN.

This sequence belongs to the HIV-1 REV protein family. Homomultimer; when bound to the RRE. Multimeric assembly is essential for activity and may involve XPO1. Binds to human KPNB1, XPO1, TNPO1, RANBP5 and IPO7. Interacts with the viral Integrase. Interacts with human KHDRBS1. Interacts with human NAP1; this interaction decreases Rev multimerization and stimulates its activity. Interacts with human DEAD-box helicases DDX3 and DDX24; these interactions may serve for viral RNA export to the cytoplasm and packaging, respectively. Interacts with human PSIP1; this interaction may inhibit HIV-1 DNA integration by promoting dissociation of the Integrase-LEDGF/p75 complex. In terms of processing, asymmetrically arginine dimethylated at one site by host PRMT6. Methylation impairs the RNA-binding activity and export of viral RNA from the nucleus to the cytoplasm. Post-translationally, phosphorylated by protein kinase CK2. Presence of, and maybe binding to the N-terminus of the regulatory beta subunit of CK2 is necessary for CK2-mediated Rev's phosphorylation.

Its subcellular location is the host nucleus. It is found in the host nucleolus. The protein localises to the host cytoplasm. Functionally, escorts unspliced or incompletely spliced viral pre-mRNAs (late transcripts) out of the nucleus of infected cells. These pre-mRNAs carry a recognition sequence called Rev responsive element (RRE) located in the env gene, that is not present in fully spliced viral mRNAs (early transcripts). This function is essential since most viral proteins are translated from unspliced or partially spliced pre-mRNAs which cannot exit the nucleus by the pathway used by fully processed cellular mRNAs. Rev itself is translated from a fully spliced mRNA that readily exits the nucleus. Rev's nuclear localization signal (NLS) binds directly to KPNB1/Importin beta-1 without previous binding to KPNA1/Importin alpha-1. KPNB1 binds to the GDP bound form of RAN (Ran-GDP) and targets Rev to the nucleus. In the nucleus, the conversion from Ran-GDP to Ran-GTP dissociates Rev from KPNB1 and allows Rev's binding to the RRE in viral pre-mRNAs. Rev multimerization on the RRE via cooperative assembly exposes its nuclear export signal (NES) to the surface. Rev can then form a complex with XPO1/CRM1 and Ran-GTP, leading to nuclear export of the complex. Conversion from Ran-GTP to Ran-GDP mediates dissociation of the Rev/RRE/XPO1/RAN complex, so that Rev can return to the nucleus for a subsequent round of export. Beside KPNB1, also seems to interact with TNPO1/Transportin-1, RANBP5/IPO5 and IPO7/RANBP7 for nuclear import. The nucleoporin-like HRB/RIP is an essential cofactor that probably indirectly interacts with Rev to release HIV RNAs from the perinuclear region to the cytoplasm. In Pan (chimpanzees), this protein is Protein Rev.